The following is a 943-amino-acid chain: Isoleucine--tRNA ligase (943 aa).

The 'HIGH' region signature appears at 58–68; sequence PYANGKIHIGH. L-isoleucyl-5'-AMP is bound at residue E567. A 'KMSKS' region motif is present at residues 608-612; the sequence is KMSKS. K611 lines the ATP pocket. Residues C906, C909, C926, and C929 each contribute to the Zn(2+) site.

It belongs to the class-I aminoacyl-tRNA synthetase family. IleS type 1 subfamily. Monomer. It depends on Zn(2+) as a cofactor.

Its subcellular location is the cytoplasm. The catalysed reaction is tRNA(Ile) + L-isoleucine + ATP = L-isoleucyl-tRNA(Ile) + AMP + diphosphate. Its function is as follows. Catalyzes the attachment of isoleucine to tRNA(Ile). As IleRS can inadvertently accommodate and process structurally similar amino acids such as valine, to avoid such errors it has two additional distinct tRNA(Ile)-dependent editing activities. One activity is designated as 'pretransfer' editing and involves the hydrolysis of activated Val-AMP. The other activity is designated 'posttransfer' editing and involves deacylation of mischarged Val-tRNA(Ile). This Pseudomonas putida (strain W619) protein is Isoleucine--tRNA ligase.